The chain runs to 613 residues: Glutathione S-transferase C-terminal domain-containing protein (613 aa).

One can recognise a GST C-terminal domain in the interval 116–312; sequence LGFKKTCLKA…QQVPGVRFAA (197 aa).

This sequence belongs to the GSTCD family.

The protein resides in the cytoplasm. The sequence is that of Glutathione S-transferase C-terminal domain-containing protein (gstcd) from Xenopus laevis (African clawed frog).